A 584-amino-acid chain; its full sequence is Pentatricopeptide repeat-containing protein At2g01510, mitochondrial (584 aa).

The transit peptide at 1–20 (MLAKQTPLTKQMLSELLRAS) directs the protein to the mitochondrion. PPR repeat units follow at residues 73–107 (RIFL…GVRP), 108–142 (DEFT…GFGC), 143–173 (LGIV…MQVK), 174–208 (DLVA…AVQF), 209–243 (DSFT…EIDC), 244–274 (NIIV…MKQR), 275–309 (NVVS…GLRP), 310–344 (NYVT…NDKN), and 348–378 (RKEH…MPVE). The type E motif stretch occupies residues 383–458 (IWGALLGACA…VAAYSSVEFE (76 aa)). Residues 459-489 (GKIHFFNRGDKSHPQSKAIYEKLDEILKKIR) form a type E(+) motif region. The type DYW motif stretch occupies residues 490–584 (KMGYVPDTCS…NGVCSCKEFW (95 aa)).

This sequence belongs to the PPR family. PCMP-H subfamily.

It localises to the mitochondrion. The polypeptide is Pentatricopeptide repeat-containing protein At2g01510, mitochondrial (PCMP-H37) (Arabidopsis thaliana (Mouse-ear cress)).